The following is a 455-amino-acid chain: Glutamate-1-semialdehyde 2,1-aminomutase (455 aa).

Lysine 286 is modified (N6-(pyridoxal phosphate)lysine).

Belongs to the class-III pyridoxal-phosphate-dependent aminotransferase family. HemL subfamily. In terms of assembly, homodimer. The cofactor is pyridoxal 5'-phosphate.

Its subcellular location is the cytoplasm. The catalysed reaction is (S)-4-amino-5-oxopentanoate = 5-aminolevulinate. Its pathway is porphyrin-containing compound metabolism; protoporphyrin-IX biosynthesis; 5-aminolevulinate from L-glutamyl-tRNA(Glu): step 2/2. In Clavibacter sepedonicus (Clavibacter michiganensis subsp. sepedonicus), this protein is Glutamate-1-semialdehyde 2,1-aminomutase.